Here is a 166-residue protein sequence, read N- to C-terminus: Stress response protein NhaX (166 aa).

It belongs to the universal stress protein A family.

The protein is Stress response protein NhaX (nhaX) of Bacillus subtilis (strain 168).